The following is a 745-amino-acid chain: Probable endochitinase ARB_07371 (745 aa).

An N-terminal signal peptide occupies residues Met1–Ala23. Positions Thr30–Asn351 constitute a GH18 domain. Catalysis depends on Glu178, which acts as the Proton donor. 2 disordered regions span residues Asn351–Thr372 and Trp395–Ile446. Positions Thr357–Thr372 are enriched in low complexity. N-linked (GlcNAc...) asparagine glycosylation is found at Asn438 and Asn484. Residues Ser651–Thr715 are disordered. Residue Gly720 is the site of GPI-anchor amidated glycine attachment. A propeptide spans Gly721–Gln745 (removed in mature form).

Belongs to the glycosyl hydrolase 18 family. Chitinase class III subfamily.

Its subcellular location is the cell membrane. It localises to the secreted. The protein localises to the cell wall. It carries out the reaction Random endo-hydrolysis of N-acetyl-beta-D-glucosaminide (1-&gt;4)-beta-linkages in chitin and chitodextrins.. Functionally, GPI-anchored chitinase involved in the degradation of chitin, a component of the cell walls of fungi and exoskeletal elements of some animals (including worms and arthropods). Required to reshape the cell wall at the sites where cell wall remodeling and/or cell wall maturation actively take place such as sites of conidia formation. The polypeptide is Probable endochitinase ARB_07371 (Arthroderma benhamiae (strain ATCC MYA-4681 / CBS 112371) (Trichophyton mentagrophytes)).